The sequence spans 569 residues: Sulfite reductase [NADPH] hemoprotein beta-component (569 aa).

The [4Fe-4S] cluster site is built by cysteine 433, cysteine 439, cysteine 478, and cysteine 482. Siroheme is bound at residue cysteine 482.

This sequence belongs to the nitrite and sulfite reductase 4Fe-4S domain family. Alpha(8)-beta(8). The alpha component is a flavoprotein, the beta component is a hemoprotein. Siroheme serves as cofactor. It depends on [4Fe-4S] cluster as a cofactor.

It catalyses the reaction hydrogen sulfide + 3 NADP(+) + 3 H2O = sulfite + 3 NADPH + 4 H(+). Its pathway is sulfur metabolism; hydrogen sulfide biosynthesis; hydrogen sulfide from sulfite (NADPH route): step 1/1. Functionally, component of the sulfite reductase complex that catalyzes the 6-electron reduction of sulfite to sulfide. This is one of several activities required for the biosynthesis of L-cysteine from sulfate. The polypeptide is Sulfite reductase [NADPH] hemoprotein beta-component (Buchnera aphidicola subsp. Acyrthosiphon pisum (strain Tuc7)).